The sequence spans 522 residues: Cytochrome P450 26C1 (522 aa).

Residues Leu-9–Ala-29 traverse the membrane as a helical segment. Cys-459 contributes to the heme binding site.

It belongs to the cytochrome P450 family. It depends on heme as a cofactor. As to expression, detected in most tissues at very low level.

It is found in the membrane. It catalyses the reaction an organic molecule + reduced [NADPH--hemoprotein reductase] + O2 = an alcohol + oxidized [NADPH--hemoprotein reductase] + H2O + H(+). The catalysed reaction is all-trans-retinoate + reduced [NADPH--hemoprotein reductase] + O2 = all-trans-4-hydroxyretinoate + oxidized [NADPH--hemoprotein reductase] + H2O + H(+). It carries out the reaction all-trans-4-hydroxyretinoate + reduced [NADPH--hemoprotein reductase] + O2 = all-trans-4-oxoretinoate + oxidized [NADPH--hemoprotein reductase] + 2 H2O + H(+). The enzyme catalyses 9-cis-retinoate + reduced [NADPH--hemoprotein reductase] + O2 = 9-cis-4-hydroxyretinoate + oxidized [NADPH--hemoprotein reductase] + H2O + H(+). It catalyses the reaction 9-cis-4-hydroxyretinoate + reduced [NADPH--hemoprotein reductase] + O2 = 9-cis-4-oxoretinoate + oxidized [NADPH--hemoprotein reductase] + 2 H2O + H(+). The catalysed reaction is all-trans-4-hydroxy-13,14-dihydroretinoate + reduced [NADPH--hemoprotein reductase] + O2 = all-trans-4-oxo-13,14-dihydroretinoate + oxidized [NADPH--hemoprotein reductase] + 2 H2O + H(+). It carries out the reaction all-trans-13,14-dihydroretinoate + reduced [NADPH--hemoprotein reductase] + O2 = all-trans-4-hydroxy-13,14-dihydroretinoate + oxidized [NADPH--hemoprotein reductase] + H2O + H(+). In terms of biological role, a cytochrome P450 monooxygenase involved in the metabolism of retinoates (RAs), the active metabolites of vitamin A, and critical signaling molecules in animals. RAs exist as at least four different isomers: all-trans-RA (atRA), 9-cis-RA, 13-cis-RA, and 9,13-dicis-RA, where atRA is considered to be the biologically active isomer, although 9-cis-RA and 13-cis-RA also have activity. Catalyzes the oxidation of atRA primarily at C-4. Oxidation of atRA limits its biological activity and initiates a degradative process leading to its eventual elimination, thereby contributes to the regulation of atRA homeostasis and signaling. Able to metabolize other RAs such as 9-cis with high efficiency. Can oxidize all-trans-13,14-dihydroretinoate (DRA) to metabolites which could include all-trans-4-oxo-DRA, all-trans-4-hydroxy-DRA, all-trans-5,8-epoxy-DRA, and all-trans-18-hydroxy-DRA. Shares sequence similarity with other CYP26 family members, but has higher affinity to 9-cis-RA and is much less sensitive to the inhibitory effects of ketoconazole. In cooperation with Cyp26a1, contributes to the CNS patterning and the development of regions of higher visual acuity. In Homo sapiens (Human), this protein is Cytochrome P450 26C1 (CYP26C1).